Consider the following 119-residue polypeptide: Ribonuclease P protein component (119 aa).

The protein belongs to the RnpA family. In terms of assembly, consists of a catalytic RNA component (M1 or rnpB) and a protein subunit.

It carries out the reaction Endonucleolytic cleavage of RNA, removing 5'-extranucleotides from tRNA precursor.. Its function is as follows. RNaseP catalyzes the removal of the 5'-leader sequence from pre-tRNA to produce the mature 5'-terminus. It can also cleave other RNA substrates such as 4.5S RNA. The protein component plays an auxiliary but essential role in vivo by binding to the 5'-leader sequence and broadening the substrate specificity of the ribozyme. This Citrobacter koseri (strain ATCC BAA-895 / CDC 4225-83 / SGSC4696) protein is Ribonuclease P protein component.